We begin with the raw amino-acid sequence, 254 residues long: 4-hydroxy-tetrahydrodipicolinate reductase (254 aa).

Residue 7–12 participates in NAD(+) binding; sequence GASGRI. R35 is an NADP(+) binding site. Residues 91–93 and 115–118 each bind NAD(+); these read GTT and AHNM. Residue H147 is the Proton donor/acceptor of the active site. Position 148 (H148) interacts with (S)-2,3,4,5-tetrahydrodipicolinate. Catalysis depends on K151, which acts as the Proton donor. Residue 157 to 158 coordinates (S)-2,3,4,5-tetrahydrodipicolinate; that stretch reads GT.

It belongs to the DapB family.

It is found in the cytoplasm. It carries out the reaction (S)-2,3,4,5-tetrahydrodipicolinate + NAD(+) + H2O = (2S,4S)-4-hydroxy-2,3,4,5-tetrahydrodipicolinate + NADH + H(+). The catalysed reaction is (S)-2,3,4,5-tetrahydrodipicolinate + NADP(+) + H2O = (2S,4S)-4-hydroxy-2,3,4,5-tetrahydrodipicolinate + NADPH + H(+). It functions in the pathway amino-acid biosynthesis; L-lysine biosynthesis via DAP pathway; (S)-tetrahydrodipicolinate from L-aspartate: step 4/4. In terms of biological role, catalyzes the conversion of 4-hydroxy-tetrahydrodipicolinate (HTPA) to tetrahydrodipicolinate. The sequence is that of 4-hydroxy-tetrahydrodipicolinate reductase from Helicobacter pylori (strain P12).